The sequence spans 454 residues: Kynurenine--oxoglutarate transaminase 3 (454 aa).

G71 contacts substrate. At K116 the chain carries N6-acetyllysine; alternate. K116 is subject to N6-succinyllysine; alternate. N218 contributes to the substrate binding site. N6-(pyridoxal phosphate)lysine is present on K280. Substrate is bound at residue R429.

Belongs to the class-I pyridoxal-phosphate-dependent aminotransferase family. As to quaternary structure, homodimer. Pyridoxal 5'-phosphate is required as a cofactor.

The enzyme catalyses L-kynurenine + 2-oxoglutarate = kynurenate + L-glutamate + H2O. It catalyses the reaction L-kynurenine + glyoxylate = kynurenate + glycine + H2O. The catalysed reaction is 3-hydroxy-L-kynurenine + glyoxylate = xanthurenate + glycine + H2O. It carries out the reaction an S-substituted L-cysteine + H2O = a thiol + pyruvate + NH4(+). It participates in amino-acid degradation; L-kynurenine degradation; kynurenate from L-kynurenine: step 1/2. Catalyzes the irreversible transamination of the L-tryptophan metabolite L-kynurenine to form kynurenic acid (KA), an intermediate in the tryptophan catabolic pathway which is also a broad spectrum antagonist of the three ionotropic excitatory amino acid receptors among others. May catalyze the beta-elimination of S-conjugates and Se-conjugates of L-(seleno)cysteine, resulting in the cleavage of the C-S or C-Se bond. Has transaminase activity towards L-kynurenine, tryptophan, phenylalanine, serine, cysteine, methionine, histidine, glutamine and asparagine with glyoxylate as an amino group acceptor (in vitro). Has lower activity with 2-oxoglutarate as amino group acceptor (in vitro). The protein is Kynurenine--oxoglutarate transaminase 3 of Rattus norvegicus (Rat).